A 95-amino-acid chain; its full sequence is Large ribosomal subunit protein uL23 (95 aa).

It belongs to the universal ribosomal protein uL23 family. Part of the 50S ribosomal subunit. Contacts protein L29, and trigger factor when it is bound to the ribosome.

Functionally, one of the early assembly proteins it binds 23S rRNA. One of the proteins that surrounds the polypeptide exit tunnel on the outside of the ribosome. Forms the main docking site for trigger factor binding to the ribosome. In Bacillus pumilus (strain SAFR-032), this protein is Large ribosomal subunit protein uL23.